Here is a 127-residue protein sequence, read N- to C-terminus: Large ribosomal subunit protein bL12 (127 aa).

Belongs to the bacterial ribosomal protein bL12 family. In terms of assembly, homodimer. Part of the ribosomal stalk of the 50S ribosomal subunit. Forms a multimeric L10(L12)X complex, where L10 forms an elongated spine to which 2 to 4 L12 dimers bind in a sequential fashion. Binds GTP-bound translation factors.

Its function is as follows. Forms part of the ribosomal stalk which helps the ribosome interact with GTP-bound translation factors. Is thus essential for accurate translation. The chain is Large ribosomal subunit protein bL12 from Streptomyces coelicolor (strain ATCC BAA-471 / A3(2) / M145).